A 542-amino-acid chain; its full sequence is MLO-like protein 7 (542 aa).

The Extracellular segment spans residues 1 to 38 (MITRSRCRRSLLWFLVFHGGATATGAPSGGKELSQTPT). A helical membrane pass occupies residues 39-59 (WAVAVVCTFLILISHLLEKGL). Residues 60-82 (QRLANWLWKKHKNSLLEALEKIK) lie on the Cytoplasmic side of the membrane. Residues 83–103 (AELMILGFISLLLTFGEPYIL) traverse the membrane as a helical segment. At 104–165 (KICVPRKAAL…ITLKGLHQLH (62 aa)) the chain is on the extracellular side. The helical transmembrane segment at 166–186 (ILLFFLAIFHIVYSLITMMLS) threads the bilayer. Over 187–288 (RLKIRGWKKW…IKRSLEDDFK (102 aa)) the chain is Cytoplasmic. The chain crosses the membrane as a helical span at residues 289 to 309 (LVVGISPVLWASFVIFLLFNV). Topologically, residues 310 to 315 (NGWRTL) are extracellular. Residues 316–336 (FWASIPPLLIILAVGTKLQAI) form a helical membrane-spanning segment. At 337–374 (MATMALEIVETHAVVQGMPLVQGSDRYFWFDCPQLLLH) the chain is on the cytoplasmic side. A helical transmembrane segment spans residues 375-395 (LIHFALFQNAFQITHFFWIWY). Topologically, residues 396 to 414 (SFGLKSCFHKDFNLVVSKL) are extracellular. A helical transmembrane segment spans residues 415–435 (FLCLGALILCSYITLPLYALV). The Cytoplasmic portion of the chain corresponds to 436-542 (TQMGSHMKKA…QQQEMQFHNS (107 aa)). Positions 449 to 470 (EQMAKALKKWHKDIKLKKGKAR) are calmodulin-binding.

The protein belongs to the MLO family. As to expression, restricted to pollen, synergids, pistils and immature anthers. Also detected in seedlings, leaves, stems and inflorescens.

Its subcellular location is the cell membrane. It localises to the endomembrane system. May be involved in modulation of pathogen defense and leaf cell death. Activity seems to be regulated by Ca(2+)-dependent calmodulin binding and seems not to require heterotrimeric G proteins. Controls pollen tube reception in the female gametophyte synergids. The polypeptide is MLO-like protein 7 (MLO7) (Arabidopsis thaliana (Mouse-ear cress)).